The primary structure comprises 25 residues: Small ribosomal subunit protein eS32 eS32z/eS32y/eS32x/eS32w/eS32v (25 aa).

The interval 1 to 25 is disordered; sequence MRAKWKKKRMRRLKRKRRKMRQRSK.

It belongs to the eukaryotic ribosomal protein eS32 family. Component of the small ribosomal subunit (SSU).

In Arabidopsis thaliana (Mouse-ear cress), this protein is Small ribosomal subunit protein eS32 eS32z/eS32y/eS32x/eS32w/eS32v (RPL41A).